We begin with the raw amino-acid sequence, 354 residues long: Ornithine transcarbamylase, mitochondrial (354 aa).

The transit peptide at 1–32 (MLSNLRILLNNAALRKGHTSVVRHFWCGKPVQ) directs the protein to the mitochondrion. Lys70 bears the N6-acetyllysine; alternate mark. The residue at position 70 (Lys70) is an N6-succinyllysine; alternate. Lys80 carries the post-translational modification N6-succinyllysine. Lys88 is modified (N6-acetyllysine; alternate). Lys88 is subject to N6-succinyllysine; alternate. 90 to 94 (STRTR) provides a ligand contact to carbamoyl phosphate. Ser133 is subject to Phosphoserine. Arg141 contacts carbamoyl phosphate. Arg141 is an L-ornithine binding site. Lys144 bears the N6-acetyllysine; alternate mark. Lys144 carries the N6-succinyllysine; alternate modification. His168 is a carbamoyl phosphate binding site. L-ornithine is bound at residue Asn199. N6-acetyllysine; alternate is present on residues Lys221, Lys231, and Lys238. 3 positions are modified to N6-succinyllysine; alternate: Lys221, Lys231, and Lys238. The residue at position 243 (Lys243) is an N6-acetyllysine. Residue 263-267 (DTWIS) coordinates L-ornithine. N6-succinyllysine occurs at positions 274 and 289. Lys292 is subject to N6-acetyllysine; alternate. Lys292 is subject to N6-succinyllysine; alternate. L-ornithine is bound at residue 302-305 (HCLP). Cys303 is an active-site residue. Lys307 carries the N6-acetyllysine; alternate modification. Lys307 is subject to N6-succinyllysine; alternate. Arg330 provides a ligand contact to carbamoyl phosphate. Residue Arg330 coordinates L-ornithine.

Belongs to the aspartate/ornithine carbamoyltransferase superfamily. OTCase family. Homotrimer. In terms of processing, acetylation at Lys-88 negatively regulates ornithine carbamoyltransferase activity in response to nutrient signals.

Its subcellular location is the mitochondrion matrix. It carries out the reaction carbamoyl phosphate + L-ornithine = L-citrulline + phosphate + H(+). It functions in the pathway nitrogen metabolism; urea cycle; L-citrulline from L-ornithine and carbamoyl phosphate: step 1/1. Negatively regulated by lysine acetylation. Its function is as follows. Catalyzes the second step of the urea cycle, the condensation of carbamoyl phosphate with L-ornithine to form L-citrulline. The urea cycle ensures the detoxification of ammonia by converting it to urea for excretion. This Mus musculus (Mouse) protein is Ornithine transcarbamylase, mitochondrial.